The primary structure comprises 193 residues: Protein D5 (193 aa).

Functionally, repression of replication initiation (possible). This Dictyostelium discoideum (Social amoeba) protein is Protein D5 (ddpE).